The primary structure comprises 1061 residues: Zinc finger protein ZFPM1 (1061 aa).

The CCHC FOG-type 1 zinc finger occupies 152–185; the sequence is VVNKDVFPCKDCGIWYRSERNLQAHLMYYCASRQ. Residues Cys160, Cys163, His176, and Cys181 each coordinate Zn(2+). C2H2-type zinc fingers lie at residues 204-228, 234-256, and 262-285; these read RICP…MRSH, FVCL…LKVH, and GVCH…VTNH. Disordered regions lie at residues 349–393 and 435–455; these read PSAT…SEET and TEMS…GAAT. Residues 378–388 show a composition bias toward low complexity; the sequence is SPISSSSSASS. Over residues 436-448 the composition is skewed to polar residues; that stretch reads EMSSPTPGSSPVP. The CCHC FOG-type 2 zinc finger occupies 508–541; the sequence is SAVPKGATCFECEITFNNINNYYVHKRLYCSGRH. Residues Cys516, Cys519, His532, and Cys537 each coordinate Zn(2+). 2 disordered regions span residues 561–586 and 599–630; these read ALAS…ESSA and MDCE…NRTV. Polar residues predominate over residues 565 to 574; it reads GFSSTEQEAS. Residues 623–656 form a CCHC FOG-type 3 zinc finger; it reads EEDPNRTVCGACNIRFSRHETYVVHKRYYCASRH. 4 residues coordinate Zn(2+): Cys631, Cys634, His647, and Cys652. The segment at 661–681 is disordered; that stretch reads RRREVNKPGPPYTTQPTPRTR. An interaction with CTBP region spans residues 736–742; the sequence is PIDLSKK. The CCHC FOG-type 4 zinc-finger motif lies at 759 to 792; the sequence is APLADYHECTACRISFNSLESYLAHKKFSCPTAP. The Zn(2+) site is built by Cys767, Cys770, His783, and Cys788. Residues 869–892 form a C2H2-type 4 zinc finger; that stretch reads TTCPYCPHNVIIRGDLLEHFRSVH. The segment at 917–1021 is disordered; sequence RGQTSSASEN…MQPPKPSLIS (105 aa). 2 stretches are compositionally biased toward low complexity: residues 933–942 and 954–972; these read VSSASPLQLP and TTSS…STPR. The span at 973–984 shows a compositional bias: pro residues; it reads PLLPTSPAPPSN. A CCHC FOG-type 5 zinc finger spans residues 1023–1056; sequence VPNGNHRYCRLCNIKFSSLSTFIAHKKYYCSSHA. The Zn(2+) site is built by Cys1031, Cys1034, His1047, and Cys1052.

It belongs to the FOG (Friend of GATA) family. As to quaternary structure, interacts with corepressor CTBP. Interacts with the N-terminal zinc-finger of GATA1 and probably GATA2. Predominantly expressed in heart and brain. Also expressed in ventral blood island and adult spleen.

Its subcellular location is the nucleus. Its function is as follows. Transcription regulator that plays an central role in red blood cell differentiation. Essential cofactor that acts via the formation of a heterodimer with transcription factors of the GATA family GATA1 and GATA2. Such heterodimer can both activate or repress transcriptional activity, depending on the cell and promoter context. Acts as a repressor of red blood cells, probably by modulating activity of GATA1. This is Zinc finger protein ZFPM1 (zfpm1) from Xenopus laevis (African clawed frog).